The sequence spans 199 residues: NADH-quinone oxidoreductase subunit C (199 aa).

This sequence belongs to the complex I 30 kDa subunit family. In terms of assembly, NDH-1 is composed of 14 different subunits. Subunits NuoB, C, D, E, F, and G constitute the peripheral sector of the complex.

The protein localises to the cell inner membrane. The enzyme catalyses a quinone + NADH + 5 H(+)(in) = a quinol + NAD(+) + 4 H(+)(out). Functionally, NDH-1 shuttles electrons from NADH, via FMN and iron-sulfur (Fe-S) centers, to quinones in the respiratory chain. The immediate electron acceptor for the enzyme in this species is believed to be ubiquinone. Couples the redox reaction to proton translocation (for every two electrons transferred, four hydrogen ions are translocated across the cytoplasmic membrane), and thus conserves the redox energy in a proton gradient. The chain is NADH-quinone oxidoreductase subunit C from Cupriavidus metallidurans (strain ATCC 43123 / DSM 2839 / NBRC 102507 / CH34) (Ralstonia metallidurans).